We begin with the raw amino-acid sequence, 111 residues long: Putative gamma-glutamylcyclotransferase BH1612 (111 aa).

Tyr14–Leu17 is a binding site for substrate. Catalysis depends on Glu55, which acts as the Proton acceptor.

The protein belongs to the gamma-glutamylcyclotransferase family.

Functionally, putative gamma-glutamylcyclotransferase. The protein is Putative gamma-glutamylcyclotransferase BH1612 of Halalkalibacterium halodurans (strain ATCC BAA-125 / DSM 18197 / FERM 7344 / JCM 9153 / C-125) (Bacillus halodurans).